A 195-amino-acid polypeptide reads, in one-letter code: SPbeta prophage-derived uncharacterized protein YotM (195 aa).

The polypeptide is SPbeta prophage-derived uncharacterized protein YotM (yotM) (Bacillus subtilis (strain 168)).